The sequence spans 1060 residues: MTSQEKVPLQVQLSLPQILSRRDWENPQITQYHRLEAHPPFHSWRDVESAQKDRPSPQQQTLNGLWSFSYFTQPEAVPEHWVRCDLAEAKPLPVPANWQLHGYDAPIYTNIQYPIPVNPPRVPDLNPTGCYSRDFTLEPSWLASGKTRIIFDGVSSAFYLWCNGQWVGYSQDSRLPAEFDLTPYLQAGSNRIAVLVLRWSDGSYLEDQDMWRMSGIFRDVKLLHKPEIHLRDIHIMTHLSPEFTSANLEVMAAVNIPSLQLNDPQVTGSYQLRVQLWLADKLVASLQQPLGTQAIDERGPYTDRTQLVLRIDQPLLWSAEQPTLYRAVVSLLNHQQELIEAEAYDVGFRQVAIHQGLLKINGKAVLIRGVNRHEHHPQTGQAIDEESLLQDILLMKQHNFNAVRCSHYPNHPLWYRLCDRYGLYVVDEANIETHGMQPMSRLSDDPSWFSAFSERVTRMVQRDRNHPCIIIWSLGNESGHGATHDALYRWIKTNDPTRPVQYEGGGANTLATDILCPMYARVDEDQPFPAVPKWSIKKWIGLPNESRPLILCEYAHAMGNSFGGFARYWQAFRQYPRLQGGFIWDWVDQSLTHHNDHGQPYWAYGGDFGDTPNDRQFCMNGLVFPDRSPHPSLYEAQCAQQFFQFSLLSTTPLVINITSEYLFRESDNEQLYWRIMLEGESVLEGSQPLNLSPESSQCYRLAEKLPTLNKPGQLWLNVEIRQPKETPWSPAQHRSAWHQWRLPQPLFSPSSDLTNATAHYAPQLQHNLQLQHDLQLQQDEQHIKVTYQQQCWQFSRQTGRLAQWWVADKPMLLRPLQDQFVRAPLDNDIGISEATHIDPNAWVERWKKAGMYQLQQRCLSLHVDHLSHSVQISAEYGYEFEQEPLLHSHWVYRFDRHGRMTIDVNVRIATSLPAPARIGMCCQLADISPTVEWLGLGPHENYPDRQLAAQYGHWSLPLEQMHTAYIFPSENGLRCNTHTLNYGRWTLTGDFHFGISRYSTQQLMVTSHQHLLEPEEGTWLNIDGFHMGVGGDDSWSPSVHIDDILTRETYQYQICWQYKV.

Substrate-binding residues include N110 and D209. D209 provides a ligand contact to Na(+). Mg(2+) contacts are provided by E432, H434, and E477. Substrate is bound by residues E477 and 553–556 (EYAH). E477 serves as the catalytic Proton donor. The Nucleophile role is filled by E553. N613 contacts Mg(2+). Na(+) is bound by residues F617 and N620. Positions 620 and 1035 each coordinate substrate.

This sequence belongs to the glycosyl hydrolase 2 family. In terms of assembly, homotetramer. It depends on Mg(2+) as a cofactor. Na(+) serves as cofactor.

It carries out the reaction Hydrolysis of terminal non-reducing beta-D-galactose residues in beta-D-galactosides.. The sequence is that of Beta-galactosidase from Yersinia pestis bv. Antiqua (strain Antiqua).